The sequence spans 702 residues: Phosphatase and actin regulator 4 (702 aa).

3 disordered regions span residues 1–37, 72–194, and 222–363; these read MEDP…KSKF, RKPR…SSGG, and NLSV…PFPA. The RPEL 1 repeat unit spans residues 63 to 88; it reads EVLERKISMRKPREELVKRGVLLEDP. Residues 72–84 are compositionally biased toward basic and acidic residues; that stretch reads RKPREELVKRGVL. The span at 106–120 shows a compositional bias: polar residues; the sequence is GHTTPIGNARSSSPV. Phosphoserine occurs at positions 116, 118, 131, and 147. Residues 147–156 show a composition bias toward polar residues; sequence STGSQPNSEA. Over residues 163 to 173 the composition is skewed to pro residues; the sequence is VPKPPLLPPKR. Positions 233 to 250 are enriched in low complexity; that stretch reads TLPAAPASTNTTATPSLT. Serine 270 and serine 291 each carry phosphoserine. A compositionally biased stretch (polar residues) spans 301 to 318; sequence PSTSVPTLESAAAITTKT. Serine 342 and serine 344 each carry phosphoserine. A compositionally biased stretch (pro residues) spans 342-362; the sequence is SPSPPLPTHIPPEPPRTPPFP. Threonine 358 carries the post-translational modification Phosphothreonine. A Phosphoserine modification is found at serine 427. The residue at position 432 (threonine 432) is a Phosphothreonine. 3 positions are modified to phosphoserine: serine 443, serine 453, and serine 464. Positions 469-536 are disordered; that stretch reads IEMLKVPDDE…EEDEDESYQS (68 aa). Residues 484 to 497 show a composition bias toward polar residues; the sequence is TCPSTFSEEMTPTS. A compositionally biased stretch (acidic residues) spans 508–518; sequence EEEEKESDSDS. Serine 514, serine 516, serine 557, and serine 590 each carry phosphoserine. RPEL repeat units follow at residues 583 to 608 and 621 to 646; these read NTLI…QPKN and RRLT…RFNE. Residues 592–615 are disordered; that stretch reads RPTPEELEQRNILQPKNEADRQAE. At serine 628 the chain carries Phosphoserine.

The protein belongs to the phosphatase and actin regulator family. Binds PPP1CA and actin.

The protein resides in the cytoplasm. It is found in the cell projection. It localises to the lamellipodium. Its function is as follows. Regulator of protein phosphatase 1 (PP1) required for neural tube and optic fissure closure, and enteric neural crest cell (ENCCs) migration during development. Acts as an activator of PP1 by interacting with PPP1CA and preventing phosphorylation of PPP1CA at 'Thr-320'. During neural tube closure, localizes to the ventral neural tube and activates PP1, leading to down-regulate cell proliferation within cranial neural tissue and the neural retina. Also acts as a regulator of migration of enteric neural crest cells (ENCCs) by activating PP1, leading to dephosphorylation and subsequent activation of cofilin (COF1 or COF2) and repression of the integrin signaling through the RHO/ROCK pathway. This Homo sapiens (Human) protein is Phosphatase and actin regulator 4 (PHACTR4).